Consider the following 55-residue polypeptide: MAKGIREKIKLVSSAGTGHFYTTTKNKRTKPEKMELKKYDPVVRQHVIYKEAKIK.

This sequence belongs to the bacterial ribosomal protein bL33 family.

This chain is Large ribosomal subunit protein bL33, found in Klebsiella pneumoniae (strain 342).